Here is a 660-residue protein sequence, read N- to C-terminus: Glycine betaine transporter (660 aa).

Residues 1 to 13 (MPSKTSSRFANIN) are Cytoplasmic-facing. Residues 14–34 (PNVFVSTIMIIAIFLAIVILA) form a helical membrane-spanning segment. The Periplasmic portion of the chain corresponds to 35–52 (PDAFELLTQQLKNWITES). Residues 53-73 (FSWFYVLSVAFFLIVLGYIAC) traverse the membrane as a helical segment. Topologically, residues 74–93 (SSSGKIKLGPDHSQPDYSNS) are cytoplasmic. The chain crosses the membrane as a helical span at residues 94–114 (SWFAMLFTAGMGIGLMFFGIA). At 115 to 139 (EPIMHYVSPPSGEPETILAAQQSMR) the chain is on the periplasmic side. The helical transmembrane segment at 140 to 160 (VTFFHWGLHAWGIYAIVALSL) threads the bilayer. The Cytoplasmic portion of the chain corresponds to 161 to 195 (SYFAYRHDLPLKIRSSLYPLIGKKIYGPMGDAVDT). The helical transmembrane segment at 196 to 216 (FATIGTIFGVATTLGFGVTQI) threads the bilayer. Residues 217 to 230 (SSGLNYLFGFEPTS) lie on the Periplasmic side of the membrane. A helical transmembrane segment spans residues 231–251 (FSKVVLIIIVSAMAALSVGLG). Over 252-263 (LDKGVKRLAELN) the chain is Cytoplasmic. Residues 264-284 (LVLAVTLLAFVFFTSATVYLL) form a helical membrane-spanning segment. At 285–316 (QTTIQNTGQYISNLFEMTFNLYAYQPNGWIGG) the chain is on the periplasmic side. The chain crosses the membrane as a helical span at residues 317 to 337 (WTIMYWAWWISWSPFVGMFIA). Topologically, residues 338-347 (RVSRGRTIRE) are cytoplasmic. Residues 348–368 (FIIGVMLIPTGFTLIWMGFMG) traverse the membrane as a helical segment. The Periplasmic segment spans residues 369 to 401 (NAGLYSILHDGNLSLLNAVQRDSSVALFEFLHS). A helical transmembrane segment spans residues 402–422 (LPFSGVMSLLATVLVVLFFVT). Topologically, residues 423–446 (SADSGALVVDYLTAKSEDSPVWQR) are cytoplasmic. The chain crosses the membrane as a helical span at residues 447–467 (LFWIVVMAGLAIILLLAGGLT). Topologically, residues 468-471 (ALQS) are periplasmic. The chain crosses the membrane as a helical span at residues 472 to 492 (ATIMSALPFTFIMLLICWGLI). Topologically, residues 493–660 (KALRIDSTKM…LSVMRAQTGN (168 aa)) are cytoplasmic.

Belongs to the BCCT transporter (TC 2.A.15) family.

The protein resides in the cell inner membrane. With respect to regulation, uptake is activated by NaCl, KCl or mannose gradients across the cell membrane. Inhibited by the protonophore 3,3',4',5-tetrachlorosalicylanilide (TCS). Its function is as follows. Energy-dependent uptake of glycine betaine in response to high salinity. In Acinetobacter baylyi (strain ATCC 33305 / BD413 / ADP1), this protein is Glycine betaine transporter.